A 147-amino-acid polypeptide reads, in one-letter code: Transmembrane protein 210 (147 aa).

The first 31 residues, 1 to 31 (MAPCPQPESCPAGSPLGLICLSLLLIPASAG), serve as a signal peptide directing secretion. Residues 32–47 (TYCECSLGLSREALIA) are Extracellular-facing. A helical membrane pass occupies residues 48–68 (LIVVLAGVSASCFCALVVVAI). Over 69 to 147 (GVFRAKGDTC…PPPPPPPLPQ (79 aa)) the chain is Cytoplasmic. The interval 128-147 (TMTAPLEPPPPPPPPPPLPQ) is disordered. A compositionally biased stretch (pro residues) spans 133-147 (LEPPPPPPPPPPLPQ).

It is found in the membrane. The protein resides in the cytoplasmic vesicle. It localises to the secretory vesicle. The protein localises to the acrosome. This is Transmembrane protein 210 (Tmem210) from Mus musculus (Mouse).